The following is a 97-amino-acid chain: UPF0250 protein HD_2015 (97 aa).

The protein belongs to the UPF0250 family.

The polypeptide is UPF0250 protein HD_2015 (Haemophilus ducreyi (strain 35000HP / ATCC 700724)).